The chain runs to 117 residues: Large ribosomal subunit protein bL20 (117 aa).

Belongs to the bacterial ribosomal protein bL20 family.

In terms of biological role, binds directly to 23S ribosomal RNA and is necessary for the in vitro assembly process of the 50S ribosomal subunit. It is not involved in the protein synthesizing functions of that subunit. The protein is Large ribosomal subunit protein bL20 of Rickettsia typhi (strain ATCC VR-144 / Wilmington).